The primary structure comprises 119 residues: Large ribosomal subunit protein uL22 (119 aa).

It belongs to the universal ribosomal protein uL22 family. In terms of assembly, part of the 50S ribosomal subunit.

This protein binds specifically to 23S rRNA; its binding is stimulated by other ribosomal proteins, e.g. L4, L17, and L20. It is important during the early stages of 50S assembly. It makes multiple contacts with different domains of the 23S rRNA in the assembled 50S subunit and ribosome. Its function is as follows. The globular domain of the protein is located near the polypeptide exit tunnel on the outside of the subunit, while an extended beta-hairpin is found that lines the wall of the exit tunnel in the center of the 70S ribosome. In Rickettsia prowazekii (strain Madrid E), this protein is Large ribosomal subunit protein uL22.